The following is a 77-amino-acid chain: Putative sulfur carrier protein YedF (77 aa).

The active-site Cysteine persulfide intermediate is the Cys-17.

The protein belongs to the sulfur carrier protein TusA family.

The chain is Putative sulfur carrier protein YedF (yedF) from Escherichia coli O157:H7.